A 456-amino-acid polypeptide reads, in one-letter code: L-seryl-tRNA(Sec) selenium transferase (456 aa).

Residue Lys288 is modified to N6-(pyridoxal phosphate)lysine.

Belongs to the SelA family. Requires pyridoxal 5'-phosphate as cofactor.

It localises to the cytoplasm. It carries out the reaction L-seryl-tRNA(Sec) + selenophosphate + H(+) = L-selenocysteinyl-tRNA(Sec) + phosphate. It participates in aminoacyl-tRNA biosynthesis; selenocysteinyl-tRNA(Sec) biosynthesis; selenocysteinyl-tRNA(Sec) from L-seryl-tRNA(Sec) (bacterial route): step 1/1. Its function is as follows. Converts seryl-tRNA(Sec) to selenocysteinyl-tRNA(Sec) required for selenoprotein biosynthesis. The polypeptide is L-seryl-tRNA(Sec) selenium transferase (Helicobacter hepaticus (strain ATCC 51449 / 3B1)).